We begin with the raw amino-acid sequence, 184 residues long: Ribulose bisphosphate carboxylase small subunit, chloroplastic 5 (184 aa).

A chloroplast-targeting transit peptide spans 1–43 (MAAAMMNKTIVVSKDGCARSSSIPKVATNKMGFASAVAMKKSR).

The protein belongs to the RuBisCO small chain family. In terms of assembly, heterohexadecamer of 8 large and 8 small subunits.

Its subcellular location is the plastid. It is found in the chloroplast. Functionally, ruBisCO catalyzes two reactions: the carboxylation of D-ribulose 1,5-bisphosphate, the primary event in carbon dioxide fixation, as well as the oxidative fragmentation of the pentose substrate. Both reactions occur simultaneously and in competition at the same active site. Although the small subunit is not catalytic it is essential for maximal activity. In Acetabularia peniculus (Green alga), this protein is Ribulose bisphosphate carboxylase small subunit, chloroplastic 5.